The following is a 218-amino-acid chain: Thiopurine S-methyltransferase (218 aa).

4 residues coordinate S-adenosyl-L-methionine: Trp11, Leu46, Glu67, and Arg122.

This sequence belongs to the class I-like SAM-binding methyltransferase superfamily. TPMT family.

It localises to the cytoplasm. The enzyme catalyses S-adenosyl-L-methionine + a thiopurine = S-adenosyl-L-homocysteine + a thiopurine S-methylether.. This is Thiopurine S-methyltransferase from Vibrio cholerae serotype O1 (strain ATCC 39541 / Classical Ogawa 395 / O395).